We begin with the raw amino-acid sequence, 619 residues long: TBC domain-containing protein C1952.17c (619 aa).

Residues 34–387 enclose the Rab-GAP TBC domain; that stretch reads PDEYSLRAKA…RLWDSIIADQ (354 aa).

The protein resides in the cytoplasm. May act as a GTPase-activating protein for Rab family protein(s). This chain is TBC domain-containing protein C1952.17c, found in Schizosaccharomyces pombe (strain 972 / ATCC 24843) (Fission yeast).